Consider the following 270-residue polypeptide: Tryptophan synthase alpha chain (270 aa).

Active-site proton acceptor residues include Glu49 and Asp60.

It belongs to the TrpA family. Tetramer of two alpha and two beta chains.

It catalyses the reaction (1S,2R)-1-C-(indol-3-yl)glycerol 3-phosphate + L-serine = D-glyceraldehyde 3-phosphate + L-tryptophan + H2O. Its pathway is amino-acid biosynthesis; L-tryptophan biosynthesis; L-tryptophan from chorismate: step 5/5. In terms of biological role, the alpha subunit is responsible for the aldol cleavage of indoleglycerol phosphate to indole and glyceraldehyde 3-phosphate. This is Tryptophan synthase alpha chain from Paraburkholderia phytofirmans (strain DSM 17436 / LMG 22146 / PsJN) (Burkholderia phytofirmans).